Reading from the N-terminus, the 239-residue chain is Probable transcriptional regulator ycf27 (239 aa).

Residues 7-120 (KILVVDDEIS…ELEARIRSLL (114 aa)) enclose the Response regulatory domain. Asp56 bears the 4-aspartylphosphate mark. Residues 76–94 (DIPIIMLTALGDVADRITG) constitute a DNA-binding region (H-T-H motif). A DNA-binding region (ompR/PhoB-type) is located at residues 135–236 (GENLQIGFLK…ARGIGYLFQN (102 aa)).

It is found in the plastid. The protein localises to the cyanelle. Probable promoter-specific protein mediating the interaction between DNA and RNA polymerase. The chain is Probable transcriptional regulator ycf27 (ycf27) from Cyanophora paradoxa.